The chain runs to 867 residues: MTGRARARARGRPPGQEAAIPPVGAASAQKTLPSHPSEQRQSLQPCHPPPLTEEPGGRGRQRGPQDAPKTLGLQISAGFQELSLADRGGRRRDFHDLGVNTRQAIEHVRESKTGSSGAMIKLIANFFRLTSRPQWALYQYHVDYNPEMEARRLRSGLLFQHEDLIGKTHAFDGSILFLPKRLPNKVTEVYSKTRNGEDVRITITLTNELPPTSPTCLQFYNIIFRRLLKMMNFQQIGRNYYNPKDPVSIPNHRLMVWPGFTSSILQYEESIMLCADVSHKILRSETVLDFMYSLYEQVEERRFRDACAKELIGVIVLTKYNNRTYRVDDIDWDANPQCTFRRADGSEISYIDYYKRQYNQDISDLNQPVLISQYRRKRGNVTVGPVVLIPELCYLTGLTEKMRNDFNMMKDLAVHTRLSPEQRQREIGKLVDCMKKDECVQKELRDWGLSFDSSLLSFTGRVVQAEKILQAGNVFDYNPQFADWSRETRVAPLIHAKPLDNWLLIYTRRNYDAANMLLQNLFKVTPSMGIRMNKATMIEVDDRTEAYLRVLQQSITPDTNIVVCILSSTRKDKYDAIKKYLCTDCPIPSQCVVARTLSKPQTALAIVTKIALQMNCKMGGELWSVEIPLKQLMIVGIDCYHDTLSGKQSIAGFVASLNEKMTRWFSRCVVQSRGQEIVDGLKACLQTALREWFKWNKYLPSRIIVYRDGVGDGQLNTLVNYEVPQFLDCLKTVGKDYNPRLTVIVVKKRVSTRFFAQAGGGLKNPPPGTVVDIEVTRPEWYDFFIVSQAVRNGCVAPTHYNVVYDTSKLKPDHVQRLTYKLCHMYYNWSGVIRVPAPCQYAHKLAFLVGQSIHREPNLLLSDRLYYL.

Over residues 1–11 (MTGRARARARG) the composition is skewed to basic residues. Residues 1 to 70 (MTGRARARAR…QRGPQDAPKT (70 aa)) form a disordered region. A compositionally biased stretch (polar residues) spans 28-44 (AQKTLPSHPSEQRQSLQ). The PAZ domain occupies 286–397 (TVLDFMYSLY…LIPELCYLTG (112 aa)). A required for binding 2'-O-methylated 3'-end of piRNAs region spans residues 324–326 (TYR). The segment at 485–621 (SRETRVAPLI…LQMNCKMGGE (137 aa)) is MID region. The Piwi domain occupies 561 to 853 (IVVCILSSTR…LAFLVGQSIH (293 aa)). Residues aspartate 638, glutamate 676, aspartate 708, and histidine 842 contribute to the active site.

Belongs to the argonaute family. Piwi subfamily. Mg(2+) is required as a cofactor. Methylated on arginine residues; required for the interaction with Tudor domain-containing protein and subsequent localization to the meiotic nuage, also named P granule.

Its subcellular location is the cytoplasm. In terms of biological role, endoribonuclease that plays a central role in postnatal germ cells by repressing transposable elements and preventing their mobilization, which is essential for the germline integrity. Acts via the piRNA metabolic process, which mediates the repression of transposable elements during meiosis by forming complexes composed of piRNAs and Piwi proteins and govern the methylation and subsequent repression of transposons. Directly binds methylated piRNAs, a class of 24 to 30 nucleotide RNAs that are generated by a Dicer-independent mechanism and are primarily derived from transposons and other repeated sequence elements. Strongly prefers a uridine in the first position of their guide (g1U preference, also named 1U-bias). Besides their function in transposable elements repression, piRNAs are probably involved in other processes during meiosis such as translation regulation. Not involved in the piRNA amplification loop, also named ping-pong amplification cycle. Acts as an endoribonuclease that cleaves transposon messenger RNAs. This is Piwi-like protein 1 (PIWIL1) from Gallus gallus (Chicken).